Here is a 265-residue protein sequence, read N- to C-terminus: Bidirectional sugar transporter NEC1 (265 aa).

The Extracellular segment spans residues 1 to 8; it reads MAQLRADD. A helical transmembrane segment spans residues 9 to 29; it reads LSFIFGLLGNIVSFMVFLAPV. The 87-residue stretch at 11–97 folds into the MtN3/slv 1 domain; the sequence is FIFGLLGNIV…SLFLFYAPRK (87 aa). Residues 30–44 lie on the Cytoplasmic side of the membrane; the sequence is PTFYKIYKRKSSEGY. The helical transmembrane segment at 45–65 threads the bilayer; sequence QAIPYMVALFSAGLLLYYAYL. Over 66 to 71 the chain is Extracellular; sequence RKNAYL. A helical transmembrane segment spans residues 72–92; sequence IVSINGFGCAIELTYISLFLF. Topologically, residues 93–103 are cytoplasmic; it reads YAPRKSKIFTG. Residues 104 to 124 traverse the membrane as a helical segment; that stretch reads WLMLLELGALGMVMPITYLLA. Over 125–130 the chain is Extracellular; sequence EGSHRV. The chain crosses the membrane as a helical span at residues 131–151; it reads MIVGWICAAINVAVFAAPLSI. In terms of domain architecture, MtN3/slv 2 spans 132-216; the sequence is IVGWICAAIN…LLYFVYKDSK (85 aa). At 152-164 the chain is on the cytoplasmic side; sequence MRQVIKTKSVEFM. The helical transmembrane segment at 165 to 185 threads the bilayer; that stretch reads PFTLSLFLTLCATMWFFYGFF. Residues 186 to 190 lie on the Extracellular side of the membrane; it reads KKDFY. The chain crosses the membrane as a helical span at residues 191 to 211; it reads IAFPNILGFLFGIVQMLLYFV. The Cytoplasmic segment spans residues 212–265; the sequence is YKDSKRIDDEKSDPVREATKSKEGVEIIINIEDDNSDNALQSMEKDFSRLRTSK.

The protein belongs to the SWEET sugar transporter family. As to quaternary structure, forms homooligomers and/or heterooligomers. As to expression, highly expressed in nectary tissue and weakly in the stamen, especially in stomium cells and in the upper part of the filaments.

The protein resides in the cell membrane. In terms of biological role, mediates both low-affinity uptake and efflux of sugar across the plasma membrane. Promotes the formation of phloem bundles in mid-veins. Probably involved in the development of stomium cells that control anther opening time. Required for pollen viability. This is Bidirectional sugar transporter NEC1 (NEC1) from Petunia hybrida (Petunia).